The chain runs to 219 residues: Ropporin-1-like protein (219 aa).

One can recognise an RIIa domain in the interval 17-54 (PELPDILKQFTKAAIRTQPHDLLQWSAAYFDSLSKGEP).

It belongs to the ropporin family. Component of axonemal radial spoke complexes.

The protein resides in the cell projection. Its subcellular location is the cilium. It is found in the flagellum. Its function is as follows. Functions as part of axonemal radial spoke complexes that play an important part in the motility of sperm and cilia. Important for male fertility. Involved in fibrous sheath integrity and sperm motility, plays a role in PKA-dependent signaling processes required for spermatozoa capacitation. This chain is Ropporin-1-like protein (ropn1l), found in Xenopus laevis (African clawed frog).